Here is a 214-residue protein sequence, read N- to C-terminus: Ribosomal RNA small subunit methyltransferase G (214 aa).

Residues G72, F77, V125–E126, and R141 each bind S-adenosyl-L-methionine.

It belongs to the methyltransferase superfamily. RNA methyltransferase RsmG family.

The protein resides in the cytoplasm. The catalysed reaction is guanosine(527) in 16S rRNA + S-adenosyl-L-methionine = N(7)-methylguanosine(527) in 16S rRNA + S-adenosyl-L-homocysteine. Its function is as follows. Specifically methylates the N7 position of guanine in position 527 of 16S rRNA. The polypeptide is Ribosomal RNA small subunit methyltransferase G (Sinorhizobium fredii (strain NBRC 101917 / NGR234)).